A 485-amino-acid polypeptide reads, in one-letter code: Glutamyl-tRNA(Gln) amidotransferase subunit A (485 aa).

Catalysis depends on charge relay system residues lysine 78 and serine 153. Catalysis depends on serine 177, which acts as the Acyl-ester intermediate.

It belongs to the amidase family. GatA subfamily. In terms of assembly, heterotrimer of A, B and C subunits.

The catalysed reaction is L-glutamyl-tRNA(Gln) + L-glutamine + ATP + H2O = L-glutaminyl-tRNA(Gln) + L-glutamate + ADP + phosphate + H(+). Allows the formation of correctly charged Gln-tRNA(Gln) through the transamidation of misacylated Glu-tRNA(Gln) in organisms which lack glutaminyl-tRNA synthetase. The reaction takes place in the presence of glutamine and ATP through an activated gamma-phospho-Glu-tRNA(Gln). The sequence is that of Glutamyl-tRNA(Gln) amidotransferase subunit A from Bacillus cereus (strain 03BB102).